A 428-amino-acid polypeptide reads, in one-letter code: Histidine--tRNA ligase (428 aa).

Belongs to the class-II aminoacyl-tRNA synthetase family.

The protein localises to the cytoplasm. It catalyses the reaction tRNA(His) + L-histidine + ATP = L-histidyl-tRNA(His) + AMP + diphosphate + H(+). This is Histidine--tRNA ligase from Korarchaeum cryptofilum (strain OPF8).